Here is a 187-residue protein sequence, read N- to C-terminus: GTP cyclohydrolase 1 (187 aa).

Zn(2+) contacts are provided by Cys76, His79, and Cys148.

This sequence belongs to the GTP cyclohydrolase I family. In terms of assembly, toroid-shaped homodecamer, composed of two pentamers of five dimers.

The enzyme catalyses GTP + H2O = 7,8-dihydroneopterin 3'-triphosphate + formate + H(+). It participates in cofactor biosynthesis; 7,8-dihydroneopterin triphosphate biosynthesis; 7,8-dihydroneopterin triphosphate from GTP: step 1/1. In Streptococcus thermophilus (strain CNRZ 1066), this protein is GTP cyclohydrolase 1.